The following is a 343-amino-acid chain: Protein RecA (343 aa).

64-71 (GPESSGKT) lines the ATP pocket.

It belongs to the RecA family.

Its subcellular location is the cytoplasm. Its function is as follows. Can catalyze the hydrolysis of ATP in the presence of single-stranded DNA, the ATP-dependent uptake of single-stranded DNA by duplex DNA, and the ATP-dependent hybridization of homologous single-stranded DNAs. It interacts with LexA causing its activation and leading to its autocatalytic cleavage. The sequence is that of Protein RecA from Bacillus cereus (strain ATCC 14579 / DSM 31 / CCUG 7414 / JCM 2152 / NBRC 15305 / NCIMB 9373 / NCTC 2599 / NRRL B-3711).